A 98-amino-acid chain; its full sequence is NADH-ubiquinone oxidoreductase chain 4L (98 aa).

A run of 3 helical transmembrane segments spans residues 1-21 (MIPT…GMLT), 27-47 (VASL…ATLI), and 61-81 (IILL…LISI).

Belongs to the complex I subunit 4L family. In terms of assembly, core subunit of respiratory chain NADH dehydrogenase (Complex I) which is composed of 45 different subunits.

The protein localises to the mitochondrion inner membrane. The enzyme catalyses a ubiquinone + NADH + 5 H(+)(in) = a ubiquinol + NAD(+) + 4 H(+)(out). In terms of biological role, core subunit of the mitochondrial membrane respiratory chain NADH dehydrogenase (Complex I) which catalyzes electron transfer from NADH through the respiratory chain, using ubiquinone as an electron acceptor. Part of the enzyme membrane arm which is embedded in the lipid bilayer and involved in proton translocation. This chain is NADH-ubiquinone oxidoreductase chain 4L (MT-ND4L), found in Macaca hecki (Heck's macaque).